A 111-amino-acid polypeptide reads, in one-letter code: MEARAIAKYIRMSPTKVGVILDLIRGKQVNEAFAILQYTPREAAVVINKVLKSAVANAENNLELNADNLYVSECFVGQGSTLKRFQPHAQGRAFKILKKTSNITVVVKERA.

Belongs to the universal ribosomal protein uL22 family. As to quaternary structure, part of the 50S ribosomal subunit.

Its function is as follows. This protein binds specifically to 23S rRNA; its binding is stimulated by other ribosomal proteins, e.g. L4, L17, and L20. It is important during the early stages of 50S assembly. It makes multiple contacts with different domains of the 23S rRNA in the assembled 50S subunit and ribosome. Functionally, the globular domain of the protein is located near the polypeptide exit tunnel on the outside of the subunit, while an extended beta-hairpin is found that lines the wall of the exit tunnel in the center of the 70S ribosome. This Clostridium beijerinckii (strain ATCC 51743 / NCIMB 8052) (Clostridium acetobutylicum) protein is Large ribosomal subunit protein uL22.